Reading from the N-terminus, the 218-residue chain is Octanoyltransferase (218 aa).

A BPL/LPL catalytic domain is found at A27–T210. Residues R72 to H79, S139 to G141, and G152 to A154 contribute to the substrate site. C170 functions as the Acyl-thioester intermediate in the catalytic mechanism.

This sequence belongs to the LipB family.

It localises to the cytoplasm. The catalysed reaction is octanoyl-[ACP] + L-lysyl-[protein] = N(6)-octanoyl-L-lysyl-[protein] + holo-[ACP] + H(+). It functions in the pathway protein modification; protein lipoylation via endogenous pathway; protein N(6)-(lipoyl)lysine from octanoyl-[acyl-carrier-protein]: step 1/2. In terms of biological role, catalyzes the transfer of endogenously produced octanoic acid from octanoyl-acyl-carrier-protein onto the lipoyl domains of lipoate-dependent enzymes. Lipoyl-ACP can also act as a substrate although octanoyl-ACP is likely to be the physiological substrate. This Nitratidesulfovibrio vulgaris (strain DSM 19637 / Miyazaki F) (Desulfovibrio vulgaris) protein is Octanoyltransferase.